The primary structure comprises 630 residues: Ribonucleoside-diphosphate reductase large subunit (630 aa).

Substrate-binding positions include S67, 82–83 (AC), G111, 317–321 (NLCSE), and 459–463 (PNATS). A disulfide bridge connects residues C83 and C334. The Proton acceptor role is filled by N317. C319 (cysteine radical intermediate) is an active-site residue. E321 serves as the catalytic Proton acceptor.

This sequence belongs to the ribonucleoside diphosphate reductase large chain family. As to quaternary structure, heterotetramer composed of a homodimer of the large subunit (R1) and a homodimer of the small subunit (R2). Larger multisubunit protein complex are also active, composed of (R1)n(R2)n.

The catalysed reaction is a 2'-deoxyribonucleoside 5'-diphosphate + [thioredoxin]-disulfide + H2O = a ribonucleoside 5'-diphosphate + [thioredoxin]-dithiol. Under complex allosteric control mediated by deoxynucleoside triphosphates and ATP binding. The type of nucleotide bound at the specificity site determines substrate preference. It seems probable that ATP makes the enzyme reduce CDP and UDP, dGTP favors ADP reduction and dTTP favors GDP reduction. Ribonucleoside-diphosphate reductase holoenzyme provides the precursors necessary for viral DNA synthesis. Allows virus growth in non-dividing cells. Catalyzes the biosynthesis of deoxyribonucleotides from the corresponding ribonucleotides. The chain is Ribonucleoside-diphosphate reductase large subunit from Aedes vexans (Inland floodwater mosquito).